Here is a 131-residue protein sequence, read N- to C-terminus: Global transcriptional regulator Spx 1 (131 aa).

C10 and C13 are joined by a disulfide.

This sequence belongs to the ArsC family. Spx subfamily. As to quaternary structure, interacts with the C-terminal domain of the alpha subunit of the RNAP.

It is found in the cytoplasm. Its function is as follows. Global transcriptional regulator that plays a key role in stress response and exerts either positive or negative regulation of genes. Acts by interacting with the C-terminal domain of the alpha subunit of the RNA polymerase (RNAP). This interaction can enhance binding of RNAP to the promoter region of target genes and stimulate their transcription, or block interaction of RNAP with activator. The chain is Global transcriptional regulator Spx 1 from Bacillus anthracis.